We begin with the raw amino-acid sequence, 708 residues long: Double-strand break repair protein MRE11 (708 aa).

An N-acetylserine modification is found at S2. S2 is subject to Phosphoserine. The Mn(2+) site is built by D20, H22, and D60. Positions 87-117 (RPVQFEILSDQSVNFGFSKFPWVNYQDGNLN) are interaction with NBN. N128 serves as a coordination point for Mn(2+). The Proton donor role is filled by H129. 3 residues coordinate Mn(2+): H217, H245, and H247. A Glycyl lysine isopeptide (Lys-Gly) (interchain with G-Cter in SUMO2) cross-link involves residue K255. S275 is subject to Phosphoserine. K282 participates in a covalent cross-link: Glycyl lysine isopeptide (Lys-Gly) (interchain with G-Cter in UFM1). K339 participates in a covalent cross-link: Glycyl lysine isopeptide (Lys-Gly) (interchain with G-Cter in ubiquitin). K384 participates in a covalent cross-link: Glycyl lysine isopeptide (Lys-Gly) (interchain with G-Cter in SUMO). K416 is covalently cross-linked (Glycyl lysine isopeptide (Lys-Gly) (interchain with G-Cter in SUMO2)). K467 is covalently cross-linked (Glycyl lysine isopeptide (Lys-Gly) (interchain with G-Cter in SUMO)). K480 is covalently cross-linked (Glycyl lysine isopeptide (Lys-Gly) (interchain with G-Cter in ubiquitin)). Disordered regions lie at residues 507 to 540 (TRQKNTNEEDDEVREAMTRARALRSQSEESASAF) and 556 to 614 (NDSD…AVSA). Positions 569–579 (GRGRGRGRRGG) are enriched in basic residues. 9 positions are modified to asymmetric dimethylarginine: R570, R572, R574, R576, R577, R580, R587, R592, and R594. The GAR motif lies at 570–594 (RGRGRGRRGGRGQNSASRGGSQRGR). A compositionally biased stretch (polar residues) spans 599–614 (LETSTRSRNSKTAVSA). The residue at position 619 (S619) is a Phosphoserine. A Glycyl lysine isopeptide (Lys-Gly) (interchain with G-Cter in SUMO2) cross-link involves residue K625. Position 641 is a phosphoserine (S641). Residue S649 is modified to Phosphoserine; by PLK1. Residues 651 to 708 (VEEDIFPTTSKTDQRWSSTSSSKIMSQSQVSKGVDFESSEDDDDDPFMNTSSLRRNRR) form a disordered region. Low complexity predominate over residues 667–681 (SSTSSSKIMSQSQVS). Position 673 is an N6-lactoyllysine (K673). A phosphoserine; by ATM mark is found at S676 and S678. Positions 687–696 (ESSEDDDDDP) are enriched in acidic residues. At S688 the chain carries Phosphoserine; by CDK2. Residues S689 and S701 each carry the phosphoserine modification. Residues 698 to 708 (MNTSSLRRNRR) are compositionally biased toward polar residues.

It belongs to the MRE11/RAD32 family. Component of the MRN complex composed of two heterodimers RAD50 and MRE11 associated with a single NBN. The MRN complexes dimerize on DNA to form joined MRN-MRN oligomers required for DNA double-strand break repair. As part of the MRN complex, interacts with MCM9; the interaction recruits the complex to DNA repair sites. Component of the BASC complex, at least composed of BRCA1, MSH2, MSH6, MLH1, ATM, BLM, RAD50, MRE11 and NBN. Found in a complex with TERF2. Interacts with DCLRE1C/Artemis and DCLRE1B/Apollo. Interacts with ATF2. Interacts with EXD2. Interacts with MRNIP. Interacts with SAMHD1; leading to stimulate 3'-5' exonuclease activity. Interacts (when ubiquitinated) with UBQLN4 (via its UBA domain). Interacts with CYREN (via XLF motif). Interacts with GFI1; promoting methylation by PRMT1. Interacts with DYNLL1; inhibiting the activity of MRE11. Interacts with C1QBP and RAD50; interaction takes place in absence of DNA damage to form the MRC (MRE11-RAD50-C1QBP) complex that inhibits the activity of MRE11. Interacts with AGER/RAGE. AGER is recruited to DNA double-strand break sites where it enhances MRE11 endonuclease activity to promote DNA repair. In terms of assembly, (Microbial infection) Interacts with herpes simplex virus 1 protein UL12. Mn(2+) is required as a cofactor. Phosphorylated by ATM at Ser-676 and Ser-678 in response to DNA damage, promoting MRE11 activity: phosphorylation activates MRE11 by preventing the interaction between MRE11 and the C1QBP inhibitor. Phosphorylation at Ser-649 by PLK1 primes for phosphorylation at Ser-688 by CK2, inhibiting recruitment of the MRN complex to DNA damage sites. Post-translationally, asymmetric dimethylation by PRMT1 promotes MRE11 exonuclease activity. In terms of processing, lactylation at Lys-673 by CREBBP/CBP in response to DNA damage promotes DNA binding and MRE11 activity. Acetylated on lysine residues by KAT2A /GCN5. Post-translationally, ubiquitinated following DNA damage. Ubiquitination triggers interaction with UBQLN4, leading to MRE11 removal from chromatin and degradation by the proteasome. Ubiquitinated at Lys-339 and Lys-480 by RNF126 via 'Lys-27'- and 'Lys-29'-linked polyubiquitin chains, promoting the exonuclease activity of MRE11. In terms of processing, SUMOylated by PIAS1, stabilizing MRE11 on chromatin during end resection. DeSUMOylated by SENP3 following removal from DNA double-strand breaks (DSBs). Ufmylation at Lys-282 promotes MRE11 activity and is required for activation of the ATM and ATR kinases by the MRN complex. Post-translationally, (Microbial infection) Following infection by adenovirus E4, ubiquitinated and degraded by a SCF-like E3 ubiquitin ligase complex containing viral proteins E1B-55K and E4-ORF6.

Its subcellular location is the nucleus. It localises to the chromosome. It is found in the telomere. Interaction with SAMHD1 stimulates the double-strand-specific 3'-5' exonuclease activity. RBBP8/CtIP specifically promotes the endonuclease activity to clear protein-DNA adducts and generate clean double-strand break ends. DYNLL1-binding inhibits the activity of MRE11. MRE11 activity is inhibited by C1QBP: in absence of DNA damage, C1QBP interacts with unphosphorylated MRE11, preventing formation and activity of the MRN complex. The mirin-derivative PFM39, specifically inhibits the 3'-5' exonuclease activity. The N-alkylated mirin-derivatives PFM03 and PFM01 specifically inhibit the endonuclease activity. Functionally, core component of the MRN complex, which plays a central role in double-strand break (DSB) repair, DNA recombination, maintenance of telomere integrity and meiosis. The MRN complex is involved in the repair of DNA double-strand breaks (DSBs) via homologous recombination (HR), an error-free mechanism which primarily occurs during S and G2 phases. The complex (1) mediates the end resection of damaged DNA, which generates proper single-stranded DNA, a key initial steps in HR, and is (2) required for the recruitment of other repair factors and efficient activation of ATM and ATR upon DNA damage. Within the MRN complex, MRE11 possesses both single-strand endonuclease activity and double-strand-specific 3'-5' exonuclease activity. After DSBs, MRE11 is loaded onto DSBs sites and cleaves DNA by cooperating with RBBP8/CtIP to initiate end resection. MRE11 first endonucleolytically cleaves the 5' strand at DNA DSB ends to prevent non-homologous end joining (NHEJ) and licence HR. It then generates a single-stranded DNA gap via 3' to 5' exonucleolytic degradation to create entry sites for EXO1- and DNA2-mediated 5' to 3' long-range resection, which is required for single-strand invasion and recombination. RBBP8/CtIP specifically promotes the endonuclease activity of MRE11 to clear protein-DNA adducts and generate clean double-strand break ends. MRE11 endonuclease activity is also enhanced by AGER/RAGE. The MRN complex is also required for DNA damage signaling via activation of the ATM and ATR kinases: the nuclease activity of MRE11 is not required to activate ATM and ATR. The MRN complex is also required for the processing of R-loops. The MRN complex is involved in the activation of the cGAS-STING pathway induced by DNA damage during tumorigenesis: the MRN complex acts by displacing CGAS from nucleosome sequestration, thereby activating it. In telomeres the MRN complex may modulate t-loop formation. MRE11 contains two DNA-binding domains (DBDs), enabling it to bind both single-stranded DNA (ssDNA) and double-stranded DNA (dsDNA). In Homo sapiens (Human), this protein is Double-strand break repair protein MRE11.